The sequence spans 310 residues: Proline dehydrogenase (310 aa).

Residue lysine 98 coordinates substrate. The active site involves aspartate 135. FAD-binding positions include methionine 136, glutamine 166, arginine 187–alanine 192, threonine 229–histidine 230, and arginine 292–glutamate 295. Residue arginine 187 is part of the active site. Position 291–292 (arginine 291–arginine 292) interacts with substrate.

Belongs to the proline dehydrogenase family. Requires FAD as cofactor.

The enzyme catalyses L-proline + a quinone = (S)-1-pyrroline-5-carboxylate + a quinol + H(+). The protein operates within amino-acid degradation; L-proline degradation into L-glutamate; L-glutamate from L-proline: step 1/2. Converts proline to delta-1-pyrroline-5-carboxylate. The polypeptide is Proline dehydrogenase (Deinococcus radiodurans (strain ATCC 13939 / DSM 20539 / JCM 16871 / CCUG 27074 / LMG 4051 / NBRC 15346 / NCIMB 9279 / VKM B-1422 / R1)).